Reading from the N-terminus, the 413-residue chain is Aspartate aminotransferase, cytoplasmic (413 aa).

Residues Gly-39 and Trp-141 each contribute to the L-aspartate site. Phosphoserine is present on Ser-149. Asn-195 is a binding site for L-aspartate. The residue at position 259 (Lys-259) is an N6-(pyridoxal phosphate)lysine. Residue Lys-318 is modified to N6-succinyllysine. Arg-387 serves as a coordination point for L-aspartate.

The protein belongs to the class-I pyridoxal-phosphate-dependent aminotransferase family. Homodimer. Requires pyridoxal 5'-phosphate as cofactor. As to expression, expressed in neurons of the retina. Localizes to the inner and outer plexiform layers, the inner and outer nuclear layer and the outer segments of photoreceptors.

It is found in the cytoplasm. The catalysed reaction is L-aspartate + 2-oxoglutarate = oxaloacetate + L-glutamate. It catalyses the reaction L-cysteine + 2-oxoglutarate = 2-oxo-3-sulfanylpropanoate + L-glutamate. The enzyme catalyses (2S)-2-aminobutanoate + 2-oxoglutarate = 2-oxobutanoate + L-glutamate. It carries out the reaction 3-sulfino-L-alanine + 2-oxoglutarate = 3-sulfinopyruvate + L-glutamate. Inhibited by calcium ions. Its function is as follows. Biosynthesis of L-glutamate from L-aspartate or L-cysteine. Important regulator of levels of glutamate, the major excitatory neurotransmitter of the vertebrate central nervous system. Acts as a scavenger of glutamate in brain neuroprotection. The aspartate aminotransferase activity is involved in hepatic glucose synthesis during development and in adipocyte glyceroneogenesis. Using L-cysteine as substrate, regulates levels of mercaptopyruvate, an important source of hydrogen sulfide. Mercaptopyruvate is converted into H(2)S via the action of 3-mercaptopyruvate sulfurtransferase (3MST). Hydrogen sulfide is an important synaptic modulator and neuroprotectant in the brain. This chain is Aspartate aminotransferase, cytoplasmic, found in Mus musculus (Mouse).